The following is a 165-amino-acid chain: UI (165 aa).

Residues 1-18 (MKPVPLILLLATVLLSSH) form the signal peptide. Position 163 is a valine amide (V163).

It belongs to the sauvagine/corticotropin-releasing factor/urotensin I family.

Its subcellular location is the secreted. Its function is as follows. Urotensin is found in the teleost caudal neurosecretory system. It has a suggested role in osmoregulation and as a corticotropin-releasing factor. The non-hormonal portion of this precursor may be a urotensin binding protein, urophysin. The sequence is that of UI from Oncorhynchus mykiss (Rainbow trout).